Here is a 440-residue protein sequence, read N- to C-terminus: Indoleamine 2,3-dioxygenase qulI (440 aa).

A heme-binding site is contributed by histidine 347.

It belongs to the indoleamine 2,3-dioxygenase family. As to quaternary structure, monomer. The cofactor is heme.

The enzyme catalyses D-tryptophan + O2 = N-formyl-D-kynurenine. It catalyses the reaction L-tryptophan + O2 = N-formyl-L-kynurenine. It participates in secondary metabolite biosynthesis. Indoleamine 2,3-dioxygenase; part of the gene cluster that mediates the biosynthesis of quinolactacin A2 (QUL A2), a fungal alkaloid that features a quinolone-gamma-lactam hybrid, which is a potential pharmacophore for the treatment of cancer and Alzheimer's disease. The quinolone-gamma-lactam hybrid scaffold is synthesized from the combination of L-isoleucine (L-Ile) and the nonproteinogenic amino acid L-kynurenine, followed by quinolone cyclization, oxidative decarboxylation, and lactam formation. Additionally, the N-methyl group is derived from methionine, which might be catalyzed by an S-adenosylmethionine (SAM)-dependent methyltransferase. Bioconversion of L-tryptophan to L-kynurenine could be catalyzed by the indoleamine-2,3-dioxygenase (IDO) qulI to produce an unstable product, N-formyl-L-kynurenine, followed by kynurenine formamidase catalyzed hydrolysis. QulM then acts as a methyltransferase that methylates L-kynurenine at the N-4 position. The FMN-dependent alpha-hydroxy acid dehydrogenase qulF than functions as an oxidative decarboxylase which converts N-methylkynurenine into 2-aminobenzoylacetamide via 2 tandem reactions, including dehydrogenation and decarboxylation. An amidase located outside of the qul gene cluster further produces the unstable beta-keto acid precursor N-methyl-2-aminobenzoylacetate, which could be spontaneously dehydrated to form N-methyl-4-hydroxy-2-quinolone. The NRPS qulB is able to incorporate N-methyl-2-aminobenzoylacetate and efficiently compete with the spontaneous reaction. By further extending the beta-keto acid with L-Ile, qulA performs a Dieckmann condensation to form the gamma-lactam ring and release a 4-ketopyrrolidinone intermediate from the assembly line. This intermediate could plausibly further undergo a spontaneous cyclization to yield the final quinolone-gamma-lactam hybrid structure. This is Indoleamine 2,3-dioxygenase qulI from Penicillium citrinum.